Here is a 194-residue protein sequence, read N- to C-terminus: Ribonuclease HII (194 aa).

An RNase H type-2 domain is found at 3-193 (ILTAGVDEAG…VRNLLAQQAL (191 aa)). 3 residues coordinate a divalent metal cation: Asp9, Glu10, and Asp101.

The protein belongs to the RNase HII family. Requires Mn(2+) as cofactor. The cofactor is Mg(2+).

The protein resides in the cytoplasm. It carries out the reaction Endonucleolytic cleavage to 5'-phosphomonoester.. In terms of biological role, endonuclease that specifically degrades the RNA of RNA-DNA hybrids. This Neisseria meningitidis serogroup A / serotype 4A (strain DSM 15465 / Z2491) protein is Ribonuclease HII (rnhB).